Consider the following 303-residue polypeptide: Fe-S cluster assembly protein DRE2 (303 aa).

The segment at 1–125 is N-terminal SAM-like domain; the sequence is MTHSRTALVL…WQKRAVTASA (125 aa). Positions 126 to 188 are linker; that stretch reads PVKLAPRQPV…GDAPIAENDL (63 aa). [2Fe-2S] cluster is bound by residues cysteine 202, cysteine 213, cysteine 216, and cysteine 218. A fe-S binding site A region spans residues 202–218; the sequence is CGRTQTRRRKACKDCTC. The [4Fe-4S] cluster site is built by cysteine 266, cysteine 269, cysteine 277, and cysteine 280. 2 short sequence motifs (cx2C motif) span residues 266–269 and 277–280; these read CGSC and CSGC. Positions 266–280 are fe-S binding site B; that stretch reads CGSCSLGDAFRCSGC.

The protein belongs to the anamorsin family. In terms of assembly, monomer. Interacts with TAH18. Interacts with MIA40. It depends on [2Fe-2S] cluster as a cofactor. The cofactor is [4Fe-4S] cluster.

The protein resides in the cytoplasm. It is found in the mitochondrion intermembrane space. In terms of biological role, component of the cytosolic iron-sulfur (Fe-S) protein assembly (CIA) machinery required for the maturation of extramitochondrial Fe-S proteins. Part of an electron transfer chain functioning in an early step of cytosolic Fe-S biogenesis, facilitating the de novo assembly of a [4Fe-4S] cluster on the scaffold complex CFD1-NBP35. Electrons are transferred to DRE2 from NADPH via the FAD- and FMN-containing protein TAH18. TAH18-DRE2 are also required for the assembly of the diferric tyrosyl radical cofactor of ribonucleotide reductase (RNR), probably by providing electrons for reduction during radical cofactor maturation in the catalytic small subunit RNR2. The protein is Fe-S cluster assembly protein DRE2 of Eremothecium gossypii (strain ATCC 10895 / CBS 109.51 / FGSC 9923 / NRRL Y-1056) (Yeast).